The primary structure comprises 122 residues: UPF0102 protein Smed_3545 (122 aa).

This sequence belongs to the UPF0102 family.

The protein is UPF0102 protein Smed_3545 of Sinorhizobium medicae (strain WSM419) (Ensifer medicae).